The following is a 266-amino-acid chain: 3-deoxy-manno-octulosonate cytidylyltransferase 1 (266 aa).

It belongs to the KdsB family.

The protein resides in the cytoplasm. The enzyme catalyses 3-deoxy-alpha-D-manno-oct-2-ulosonate + CTP = CMP-3-deoxy-beta-D-manno-octulosonate + diphosphate. It functions in the pathway nucleotide-sugar biosynthesis; CMP-3-deoxy-D-manno-octulosonate biosynthesis; CMP-3-deoxy-D-manno-octulosonate from 3-deoxy-D-manno-octulosonate and CTP: step 1/1. The protein operates within bacterial outer membrane biogenesis; lipopolysaccharide biosynthesis. Activates KDO (a required 8-carbon sugar) for incorporation into bacterial lipopolysaccharide in Gram-negative bacteria. The protein is 3-deoxy-manno-octulosonate cytidylyltransferase 1 of Paraburkholderia phytofirmans (strain DSM 17436 / LMG 22146 / PsJN) (Burkholderia phytofirmans).